The chain runs to 227 residues: PKHD-type hydroxylase BTH_II1201 (227 aa).

A Fe2OG dioxygenase domain is found at lysine 78–serine 178. Residues histidine 96, aspartate 98, and histidine 159 each coordinate Fe cation. Arginine 169 lines the 2-oxoglutarate pocket.

Fe(2+) serves as cofactor. Requires L-ascorbate as cofactor.

This is PKHD-type hydroxylase BTH_II1201 from Burkholderia thailandensis (strain ATCC 700388 / DSM 13276 / CCUG 48851 / CIP 106301 / E264).